The primary structure comprises 96 residues: uncharacterized protein (96 aa).

An N-terminal signal peptide occupies residues 1–19 (MKFLSALLLIVLLISVVFG). The N-linked (GlcNAc...) asparagine glycan is linked to N20. The segment covering 27-46 (AWATTTTGGTTGSQTSPATH) has biased composition (low complexity). The interval 27 to 58 (AWATTTTGGTTGSQTSPATHGGHGGNGGNGHS) is disordered. A compositionally biased stretch (gly residues) spans 47–56 (GGHGGNGGNG).

Its subcellular location is the secreted. This is an uncharacterized protein from Dictyostelium discoideum (Social amoeba).